Consider the following 674-residue polypeptide: Inactivation-no-after-potential D protein (674 aa).

One can recognise a PDZ 1 domain in the interval 17-106 (MVTLDKTGKK…KIELEIQTFD (90 aa)). A disordered region spans residues 133–192 (QTTNNNASGGQGMGQGQGQGQGMAGMNRQQSMQKRNTTFTASMRQKHSNYADEDDEDTRD). A compositionally biased stretch (gly residues) spans 141 to 155 (GGQGMGQGQGQGQGM). The span at 159 to 175 (NRQQSMQKRNTTFTASM) shows a compositional bias: polar residues. 2 PDZ domains span residues 249–332 (RIEV…TSRR) and 364–448 (ARTV…LTLK). Residues 458-475 (AAEEKKKEEAKKEEEKPQ) are compositionally biased toward basic and acidic residues. The disordered stretch occupies residues 458–481 (AAEEKKKEEAKKEEEKPQEPATAE). PDZ domains lie at 489–577 (LIEL…RADP) and 584–664 (NVDL…TRPK). Phosphoserine is present on residues Ser-598 and Ser-600.

Interacts with the C-terminus of trp, and with norpA and inaC to form the inaD signaling complex. Interacts with Fkbp59, which together with trpl, rhodopsin and calmodulin may also be part of the inaD complex. Phosphorylated by inaC. As to expression, expressed in photoreceptor cells (R cells) of the compound eyes and ocelli.

The protein resides in the cell projection. It localises to the rhabdomere. Its function is as follows. Involved in the negative feedback regulation of the light-activated signaling cascade in photoreceptors through a calcium-mediated process. Interacts with tetrapeptide ligand located in C-terminal sequence of 3 key components of the visual cascade, tethering them and forming a macromolecular signaling phototransduction complex. The protein is Inactivation-no-after-potential D protein (inaD) of Drosophila melanogaster (Fruit fly).